The sequence spans 366 residues: Chorismate synthase (366 aa).

An NADP(+)-binding site is contributed by Arg-48. FMN is bound by residues 125-127, Gly-285, 300-304, and Arg-327; these read RSS and KPTPS.

The protein belongs to the chorismate synthase family. Requires FMNH2 as cofactor.

It catalyses the reaction 5-O-(1-carboxyvinyl)-3-phosphoshikimate = chorismate + phosphate. Its pathway is metabolic intermediate biosynthesis; chorismate biosynthesis; chorismate from D-erythrose 4-phosphate and phosphoenolpyruvate: step 7/7. Catalyzes the anti-1,4-elimination of the C-3 phosphate and the C-6 proR hydrogen from 5-enolpyruvylshikimate-3-phosphate (EPSP) to yield chorismate, which is the branch point compound that serves as the starting substrate for the three terminal pathways of aromatic amino acid biosynthesis. This reaction introduces a second double bond into the aromatic ring system. This chain is Chorismate synthase, found in Methanococcoides burtonii (strain DSM 6242 / NBRC 107633 / OCM 468 / ACE-M).